A 245-amino-acid polypeptide reads, in one-letter code: Rhamnosyl O-methyltransferase (245 aa).

The N-terminal stretch at 1–38 (MGLVWRSRTSLVGQLIGLVRLVASFAAQLFYRPSDAVA) is a signal peptide.

The protein belongs to the rhamnosyl O-methyltransferase family.

In terms of biological role, catalyzes the O-methylation of the hydroxyl group located on C-2 of the first rhamnosyl residue linked to the phenolic group of glycosylated phenolphthiocerol dimycocerosates (PGL) and p-hydroxybenzoic acid derivatives (p-HBAD). In Mycobacterium bovis (strain ATCC BAA-935 / AF2122/97), this protein is Rhamnosyl O-methyltransferase.